The primary structure comprises 1265 residues: Protein diaphanous homolog 1 (1265 aa).

Position 1 is an N-acetylmethionine (methionine 1). A compositionally biased stretch (gly residues) spans methionine 1–arginine 12. 2 disordered regions span residues methionine 1–lysine 42 and serine 54–serine 83. Serine 22 is modified (phosphoserine). The span at serine 54–asparagine 65 shows a compositional bias: basic and acidic residues. The span at alanine 67–serine 83 shows a compositional bias: polar residues. The GBD/FH3 domain maps to leucine 84–aspartate 449. The stretch at valine 474–valine 568 forms a coiled coil. Residues serine 573–proline 742 are disordered. 2 stretches are compositionally biased toward pro residues: residues isoleucine 594–proline 628 and isoleucine 645–proline 742. An FH1 domain is found at proline 625–proline 757. The residue at position 761 (threonine 761) is a Phosphothreonine. One can recognise an FH2 domain in the interval proline 762–lysine 1164. 2 positions are modified to N6-acetyllysine: lysine 1050 and lysine 1096. At tyrosine 1114 the chain carries Phosphotyrosine. Positions alanine 1141–glutamate 1185 form a coiled coil. Residues aspartate 1187–asparagine 1215 enclose the DAD domain. A Phosphoserine modification is found at serine 1247.

Belongs to the formin homology family. Diaphanous subfamily. As to quaternary structure, homodimer. Interacts with the GTP-bound form of RHOA. Interacts with RHOC, PFY1, MAPRE1, BAIAP2 and APC. Interacts with SCAI. Interacts with DCAF7, via FH2 domain. Interacts with NCDN. Interacts with OSBPL10, OSBPL2, VIM, TUBB and DYN1. Post-translationally, phosphorylation at Thr-761 is stimulated by cAMP and regulates stability, complex formation and mitochondrial movement. As to expression, expressed in testis. Present in Sertoli cells (at protein level).

The protein localises to the cell membrane. Its subcellular location is the cell projection. It is found in the ruffle membrane. The protein resides in the cytoplasm. It localises to the cytoskeleton. The protein localises to the microtubule organizing center. Its subcellular location is the centrosome. It is found in the spindle. The protein resides in the nucleus. Its function is as follows. Actin nucleation and elongation factor required for the assembly of F-actin structures, such as actin cables and stress fibers. Binds to the barbed end of the actin filament and slows down actin polymerization and depolymerization. Required for cytokinesis, and transcriptional activation of the serum response factor. DFR proteins couple Rho and Src tyrosine kinase during signaling and the regulation of actin dynamics. Functions as a scaffold protein for MAPRE1 and APC to stabilize microtubules and promote cell migration. Has neurite outgrowth promoting activity. Acts in a Rho-dependent manner to recruit PFY1 to the membrane. The MEMO1-RHOA-DIAPH1 signaling pathway plays an important role in ERBB2-dependent stabilization of microtubules at the cell cortex. It controls the localization of APC and CLASP2 to the cell membrane, via the regulation of GSK3B activity. In turn, membrane-bound APC allows the localization of the MACF1 to the cell membrane, which is required for microtubule capture and stabilization. Plays a role in the regulation of cell morphology and cytoskeletal organization. Required in the control of cell shape. Also acts as an actin nucleation and elongation factor in the nucleus by promoting nuclear actin polymerization inside the nucleus to drive serum-dependent SRF-MRTFA activity. The chain is Protein diaphanous homolog 1 from Rattus norvegicus (Rat).